Here is a 208-residue protein sequence, read N- to C-terminus: PITH domain-containing protein ZK353.9 (208 aa).

One can recognise a PITH domain in the interval E17–R189.

Belongs to the PITHD1 family.

The sequence is that of PITH domain-containing protein ZK353.9 from Caenorhabditis elegans.